A 118-amino-acid polypeptide reads, in one-letter code: Large ribosomal subunit protein bL20 (118 aa).

It belongs to the bacterial ribosomal protein bL20 family.

Functionally, binds directly to 23S ribosomal RNA and is necessary for the in vitro assembly process of the 50S ribosomal subunit. It is not involved in the protein synthesizing functions of that subunit. The sequence is that of Large ribosomal subunit protein bL20 from Sodalis glossinidius (strain morsitans).